We begin with the raw amino-acid sequence, 881 residues long: Putative outer membrane usher protein YfcU (881 aa).

Positions 1 to 29 are cleaved as a signal peptide; it reads MPDHSLFRLRILPWCIALAMSGSYSSVWA.

Belongs to the fimbrial export usher family.

The protein resides in the cell outer membrane. In terms of biological role, part of the yfcOPQRSUV fimbrial operon. Could contribute to adhesion to various surfaces in specific environmental niches. Increases adhesion to eukaryotic T24 bladder epithelial cells in the absence of fim genes. Probably involved in the export and assembly of fimbrial subunits across the outer membrane. The sequence is that of Putative outer membrane usher protein YfcU (yfcU) from Escherichia coli (strain K12).